A 170-amino-acid chain; its full sequence is Peptide deformylase (170 aa).

Fe cation-binding residues include Cys91 and His133. Glu134 is an active-site residue. His137 is a binding site for Fe cation.

Belongs to the polypeptide deformylase family. Requires Fe(2+) as cofactor.

The catalysed reaction is N-terminal N-formyl-L-methionyl-[peptide] + H2O = N-terminal L-methionyl-[peptide] + formate. Removes the formyl group from the N-terminal Met of newly synthesized proteins. Requires at least a dipeptide for an efficient rate of reaction. N-terminal L-methionine is a prerequisite for activity but the enzyme has broad specificity at other positions. The chain is Peptide deformylase from Actinobacillus pleuropneumoniae serotype 7 (strain AP76).